The sequence spans 95 residues: Fatty acid-binding protein, liver (95 aa).

2 positions are modified to N6-succinyllysine: Lys-13 and Lys-18. Ser-21 bears the Phosphoserine mark. At Lys-28 the chain carries N6-succinyllysine. Thr-33 carries the phosphothreonine modification. Ser-38 is modified (phosphoserine). Lys-39, Lys-47, and Lys-59 each carry N6-succinyllysine. Position 69 is a phosphoserine (Ser-69). N6-succinyllysine is present on Lys-90.

It belongs to the calycin superfamily. Fatty-acid binding protein (FABP) family. In terms of assembly, monomer.

Its subcellular location is the cytoplasm. This protein binds free fatty acids and their coenzyme A derivatives, bilirubin, and some other small molecules in the cytoplasm; it may be involved in intracellular lipid transport. The polypeptide is Fatty acid-binding protein, liver (FABP1) (Chaetophractus villosus (South American armadillo)).